The chain runs to 801 residues: Leucine--tRNA ligase (801 aa).

The short motif at 39 to 50 (PYPSGAGIHVGH) is the 'HIGH' region element. Residues 578-582 (KMSKS) carry the 'KMSKS' region motif. Lys-581 is an ATP binding site.

The protein belongs to the class-I aminoacyl-tRNA synthetase family.

The protein localises to the cytoplasm. The catalysed reaction is tRNA(Leu) + L-leucine + ATP = L-leucyl-tRNA(Leu) + AMP + diphosphate. In Mesoplasma florum (strain ATCC 33453 / NBRC 100688 / NCTC 11704 / L1) (Acholeplasma florum), this protein is Leucine--tRNA ligase.